Here is a 493-residue protein sequence, read N- to C-terminus: Sorting nexin-4 (493 aa).

The segment at 1–67 (MDQDGFHSIA…KAGEAGDVGV (67 aa)) is disordered. Positions 37–48 (SISPSSAQPPAS) are enriched in low complexity. The 123-residue stretch at 89–211 (WMDVQVREPA…DFLQSTEWSV (123 aa)) folds into the PX domain. A 1,2-diacyl-sn-glycero-3-phospho-(1D-myo-inositol-3-phosphate) is bound by residues R132, K158, and R177.

This sequence belongs to the sorting nexin family.

Its subcellular location is the cytoplasm. It is found in the cytosol. The protein localises to the preautophagosomal structure membrane. The protein resides in the endosome membrane. In terms of biological role, sorting nexin, involved in the separation or division of vacuoles throughout the entire life cycle of the cells. Involved in retrieval of late-Golgi SNAREs from post-Golgi endosomes to the trans-Golgi network, for cytoplasm to vacuole transport (Cvt), and autophagy of large cargos including mitophagy, pexophagy and glycophagy. The sequence is that of Sorting nexin-4 (SNX4) from Cryptococcus neoformans var. neoformans serotype D (strain B-3501A) (Filobasidiella neoformans).